The primary structure comprises 156 residues: Small ribosomal subunit protein uS7 (156 aa).

Belongs to the universal ribosomal protein uS7 family. In terms of assembly, part of the 30S ribosomal subunit. Contacts proteins S9 and S11.

In terms of biological role, one of the primary rRNA binding proteins, it binds directly to 16S rRNA where it nucleates assembly of the head domain of the 30S subunit. Is located at the subunit interface close to the decoding center, probably blocks exit of the E-site tRNA. The chain is Small ribosomal subunit protein uS7 from Saccharophagus degradans (strain 2-40 / ATCC 43961 / DSM 17024).